Here is a 157-residue protein sequence, read N- to C-terminus: UPF0262 protein amb3341 (157 aa).

It belongs to the UPF0262 family.

The chain is UPF0262 protein amb3341 from Paramagnetospirillum magneticum (strain ATCC 700264 / AMB-1) (Magnetospirillum magneticum).